The following is a 344-amino-acid chain: Putative voltage-gated potassium channel subunit beta (344 aa).

Trp33, Asp62, Tyr67, Ser167, Gln193, Trp222, Ser223, Pro224, Leu225, Lys233, Arg243, Gly301, Ser303, Gln307, Glu310, and Asn311 together coordinate NADP(+). The Proton donor/acceptor role is filled by Tyr67.

It belongs to the shaker potassium channel beta subunit family. In terms of assembly, forms heteromultimeric complexes with potassium channel alpha subunits.

The protein resides in the cytoplasm. The protein localises to the nucleus. Its function is as follows. Probable accessory potassium channel protein which modulates the activity of the pore-forming alpha subunit. This Schizosaccharomyces pombe (strain 972 / ATCC 24843) (Fission yeast) protein is Putative voltage-gated potassium channel subunit beta.